The sequence spans 382 residues: Queuine tRNA-ribosyltransferase (382 aa).

The active-site Proton acceptor is the aspartate 96. Substrate-binding positions include 96–100, aspartate 151, glutamine 194, and glycine 221; that span reads DSGGF. Residues 252–258 are RNA binding; that stretch reads GVGAPDS. The active-site Nucleophile is aspartate 271. The segment at 276–280 is RNA binding; important for wobble base 34 recognition; that stretch reads TRIAR. Zn(2+) contacts are provided by cysteine 309, cysteine 311, cysteine 314, and histidine 340.

Belongs to the queuine tRNA-ribosyltransferase family. As to quaternary structure, homodimer. Within each dimer, one monomer is responsible for RNA recognition and catalysis, while the other monomer binds to the replacement base PreQ1. It depends on Zn(2+) as a cofactor.

It carries out the reaction 7-aminomethyl-7-carbaguanine + guanosine(34) in tRNA = 7-aminomethyl-7-carbaguanosine(34) in tRNA + guanine. The protein operates within tRNA modification; tRNA-queuosine biosynthesis. In terms of biological role, catalyzes the base-exchange of a guanine (G) residue with the queuine precursor 7-aminomethyl-7-deazaguanine (PreQ1) at position 34 (anticodon wobble position) in tRNAs with GU(N) anticodons (tRNA-Asp, -Asn, -His and -Tyr). Catalysis occurs through a double-displacement mechanism. The nucleophile active site attacks the C1' of nucleotide 34 to detach the guanine base from the RNA, forming a covalent enzyme-RNA intermediate. The proton acceptor active site deprotonates the incoming PreQ1, allowing a nucleophilic attack on the C1' of the ribose to form the product. After dissociation, two additional enzymatic reactions on the tRNA convert PreQ1 to queuine (Q), resulting in the hypermodified nucleoside queuosine (7-(((4,5-cis-dihydroxy-2-cyclopenten-1-yl)amino)methyl)-7-deazaguanosine). This Lactococcus lactis subsp. lactis (strain IL1403) (Streptococcus lactis) protein is Queuine tRNA-ribosyltransferase.